Here is a 516-residue protein sequence, read N- to C-terminus: Myocyte-specific enhancer factor 2A homolog (516 aa).

The tract at residues 1–100 is interaction with hdac9; the sequence is MGRKKIQITR…KGLNGCESPD (100 aa). One can recognise an MADS-box domain in the interval 3–57; sequence RKKIQITRIMDERNRQVTFTKRKFGLMKKAYELSVLCDCEIALIIFNSSNKLFQY. Residues 58 to 86 constitute a DNA-binding region (mef2-type); the sequence is ASTDMDKVLLKYTEYNEPHESRTNSDIVE. Residues 318-339 form a disordered region; the sequence is PSSKGMMPPLNTQRVTSSQGTQ. Positions 327–339 are enriched in polar residues; the sequence is LNTQRVTSSQGTQ. A Phosphothreonine; by NLK modification is found at Thr343. A Phosphoserine; by NLK modification is found at Ser386. The segment covering 420–433 has biased composition (polar residues); the sequence is GSNLSINTNQNINI. A disordered region spans residues 420–516; the sequence is GSNLSINTNQ…KRMRMDAWVT (97 aa). Low complexity predominate over residues 465 to 475; that stretch reads DSLSSSSSSYD. Basic and acidic residues-rich tracts occupy residues 476–486 and 497–516; these read GSDREDVRNDF and NNEDRDSPSVKRMRMDAWVT.

Belongs to the MEF2 family. In terms of assembly, interacts with hdac9 and nlk2. In terms of tissue distribution, restricted to the somitic mesoderm of early embryos. Expressed in the head region of neurula stage embryos and in body muscle (myotomes) of the tadpole. Expressed in all tissues examined in the adult.

It localises to the nucleus. May regulate muscle-specific transcription in the embryo and may regulate transcription of a variety of cell types in the adult. Binds to the sequence 5'-CTA[TA]4TAR-3'. Acts downstream of nlk2 in anterior neural development, including eye formation. The polypeptide is Myocyte-specific enhancer factor 2A homolog (mef2a) (Xenopus laevis (African clawed frog)).